The following is a 478-amino-acid chain: Pyrrolysine--tRNA ligase (478 aa).

Residues 106-188 are disordered; sequence VMPKSVARTP…TSAMPASTSA (83 aa). A compositionally biased stretch (polar residues) spans 122 to 132; the sequence is APVQTLPSESQ. Over residues 133–188 the composition is skewed to low complexity; it reads PAPTTPISASTTAPASTSTTAPAPASTTAPAPASTTAPASASTTISTSAMPASTSA.

This sequence belongs to the class-II aminoacyl-tRNA synthetase family.

It is found in the cytoplasm. The catalysed reaction is tRNA(Pyl) + L-pyrrolysine + ATP = L-pyrrolysyl-tRNA(Pyl) + AMP + diphosphate. Its function is as follows. Catalyzes the attachment of pyrrolysine to tRNA(Pyl). Pyrrolysine is a lysine derivative encoded by the termination codon UAG. This Methanosarcina thermophila protein is Pyrrolysine--tRNA ligase.